Here is a 105-residue protein sequence, read N- to C-terminus: UPF0145 protein lpl0253 (105 aa).

It belongs to the UPF0145 family.

In Legionella pneumophila (strain Lens), this protein is UPF0145 protein lpl0253.